The following is a 338-amino-acid chain: Ribosomal RNA small subunit methyltransferase H (338 aa).

S-adenosyl-L-methionine contacts are provided by residues 53-55 (GGH), Asp72, Tyr99, Asp123, and Gln130. 2 disordered regions span residues 276–297 (EITP…PGMG) and 304–323 (TRGA…RSAP).

Belongs to the methyltransferase superfamily. RsmH family.

Its subcellular location is the cytoplasm. The catalysed reaction is cytidine(1402) in 16S rRNA + S-adenosyl-L-methionine = N(4)-methylcytidine(1402) in 16S rRNA + S-adenosyl-L-homocysteine + H(+). In terms of biological role, specifically methylates the N4 position of cytidine in position 1402 (C1402) of 16S rRNA. The polypeptide is Ribosomal RNA small subunit methyltransferase H (Rhodococcus jostii (strain RHA1)).